Here is a 239-residue protein sequence, read N- to C-terminus: MATPHINAEMGDFADVVLMPGDPLRAKHIAETFLEDVREVNNVRGMLGFTGTYKGRKISVMGHGMGIPSCSIYTKELITDFGVKKIIRVGSCGAVRADVKLRDVVIGMGACTDSKVNRLRFKDHDFAAIADFDMVRNAVDAAKALGVEARVGNIFSADLFYTPDPSMFDVMEKYGILGVEMEAAGIYGVAAEFGAKALTICTVSDHIRTHEQTTAAERQTTFNDMIKIALESVLLGDKE.

His-5 provides a ligand contact to a purine D-ribonucleoside. Phosphate-binding positions include Gly-21, Arg-25, Arg-44, and 88–91; that span reads RVGS. A purine D-ribonucleoside contacts are provided by residues 180 to 182 and 204 to 205; these read EME and SD. The active-site Proton donor is Asp-205.

It belongs to the PNP/UDP phosphorylase family. Homohexamer; trimer of homodimers.

The enzyme catalyses a purine D-ribonucleoside + phosphate = a purine nucleobase + alpha-D-ribose 1-phosphate. It carries out the reaction a purine 2'-deoxy-D-ribonucleoside + phosphate = a purine nucleobase + 2-deoxy-alpha-D-ribose 1-phosphate. Functionally, catalyzes the reversible phosphorolytic breakdown of the N-glycosidic bond in the beta-(deoxy)ribonucleoside molecules, with the formation of the corresponding free purine bases and pentose-1-phosphate. This Cronobacter sakazakii (strain ATCC BAA-894) (Enterobacter sakazakii) protein is Purine nucleoside phosphorylase DeoD-type.